A 235-amino-acid chain; its full sequence is Ribosomal RNA small subunit methyltransferase G (235 aa).

S-adenosyl-L-methionine is bound by residues Gly98, Met103, 149-150 (VE), and Arg164.

It belongs to the methyltransferase superfamily. RNA methyltransferase RsmG family.

Its subcellular location is the cytoplasm. The enzyme catalyses guanosine(527) in 16S rRNA + S-adenosyl-L-methionine = N(7)-methylguanosine(527) in 16S rRNA + S-adenosyl-L-homocysteine. Specifically methylates the N7 position of guanine in position 527 of 16S rRNA. The sequence is that of Ribosomal RNA small subunit methyltransferase G from Cupriavidus metallidurans (strain ATCC 43123 / DSM 2839 / NBRC 102507 / CH34) (Ralstonia metallidurans).